A 218-amino-acid polypeptide reads, in one-letter code: MPMILGYWNVRGLTHPIRLLLEYTDSSYEEKRYAMGDAPDYDRSQWLNEKFKLGLDFPNLPYLIDGSRKITQSNAIMRYLARKHHLCGETEEERIRADIVENQVMDNRMQLIMLCYNPDFEKQKPEFLKTIPEKMKLYSEFLGKRPWFAGDKVTYVDFLAYDILDQYHIFEPKCLDAFPNLKDFLARFEGLKKISAYMKSSRYLSTPIFSKLAQWSNK.

Residues 2–88 form the GST N-terminal domain; sequence PMILGYWNVR…YLARKHHLCG (87 aa). Residues 7–8, 43–46, Lys50, and 59–60 each bind glutathione; these read YW, RSQW, and NL. Phosphoserine is present on Ser67. 72-73 is a glutathione binding site; sequence QS. Residues 90–208 enclose the GST C-terminal domain; the sequence is TEEERIRADI…KSSRYLSTPI (119 aa). A substrate-binding site is contributed by Tyr116. Ser205 and Ser210 each carry phosphoserine.

Belongs to the GST superfamily. Mu family. In terms of assembly, homodimer or heterodimer.

It localises to the cytoplasm. It catalyses the reaction RX + glutathione = an S-substituted glutathione + a halide anion + H(+). The catalysed reaction is prostaglandin A2 + glutathione = prostaglandin A2-S-(R)-glutathione. The enzyme catalyses prostaglandin J2 + glutathione = prostaglandin J2-S-(R)-glutathione. It carries out the reaction prostaglandin J2 + glutathione = prostaglandin J2-S-(S)-glutathione. It catalyses the reaction prostaglandin A2 + glutathione = prostaglandin A2-S-(S)-glutathione. The catalysed reaction is 11(S)-hydroxy-14(S),15(S)-epoxy-(5Z,8Z,12E)-eicosatrienoate + glutathione = (11S,15S)-dihydroxy-14(R)-S-glutathionyl-(5Z,8Z,12E)-eicosatrienoate. Functionally, conjugation of reduced glutathione to a wide number of exogenous and endogenous hydrophobic electrophiles. The olfactory GST may be crucial for the acuity of the olfactory process. Participates in the formation of novel hepoxilin regioisomers. This is Glutathione S-transferase Mu 1 from Rattus norvegicus (Rat).